Consider the following 153-residue polypeptide: Histone H2B.10 (153 aa).

Composition is skewed to basic and acidic residues over residues 1–28 and 36–53; these read MAPK…EKAP and EKRL…EGKK. A disordered region spans residues 1–61; it reads MAPKAEKKPA…KKAGRKKAKK (61 aa). Residues K7 and K37 each carry the N6-acetyllysine modification. Residue K149 forms a Glycyl lysine isopeptide (Lys-Gly) (interchain with G-Cter in ubiquitin) linkage.

The protein belongs to the histone H2B family. As to quaternary structure, the nucleosome is a histone octamer containing two molecules each of H2A, H2B, H3 and H4 assembled in one H3-H4 heterotetramer and two H2A-H2B heterodimers. The octamer wraps approximately 147 bp of DNA. In terms of processing, can be acetylated to form H2BK6ac and H2BK33ac. Post-translationally, monoubiquitinated by BRE1 to form H2BK143ub1 and deubiquitinated by UBP26. Required for heterochromatic histone H3 di- and trimethylation at H3K4me. May give a specific tag for epigenetic transcriptional activation.

The protein resides in the nucleus. Its subcellular location is the chromosome. Core component of nucleosome. Nucleosomes wrap and compact DNA into chromatin, limiting DNA accessibility to the cellular machineries which require DNA as a template. Histones thereby play a central role in transcription regulation, DNA repair, DNA replication and chromosomal stability. DNA accessibility is regulated via a complex set of post-translational modifications of histones, also called histone code, and nucleosome remodeling. This chain is Histone H2B.10 (H2B.10), found in Oryza sativa subsp. indica (Rice).